The sequence spans 112 residues: MTALTQMKCEACQADAPKVTDEELAELIRMIPDWGVQVRDGIMQLERVYKFKNFKLAMAFTNKLAELAEEEFHHPGILTEWGKVTVTWWSHSIKGLHKNDFIMAAKTDLLLD.

This sequence belongs to the pterin-4-alpha-carbinolamine dehydratase family.

The catalysed reaction is (4aS,6R)-4a-hydroxy-L-erythro-5,6,7,8-tetrahydrobiopterin = (6R)-L-erythro-6,7-dihydrobiopterin + H2O. This Shewanella oneidensis (strain ATCC 700550 / JCM 31522 / CIP 106686 / LMG 19005 / NCIMB 14063 / MR-1) protein is Putative pterin-4-alpha-carbinolamine dehydratase.